Reading from the N-terminus, the 153-residue chain is MKTFVLHIFIFAFVAFASASRDSAKKIGSQYDNFETCITEHGLTEDDIFSIGEVSSGNHKTNHEDTELHKNGCVIQCMLEKDGLMSGADYDEEKMREDYIKETGAQPGDQRIEALNACMHETKDMEDKCDKSLVLVACVLAAEAVLADSSEAA.

An N-terminal signal peptide occupies residues 1–19 (MKTFVLHIFIFAFVAFASA). 3 disulfides stabilise this stretch: cysteine 37/cysteine 77, cysteine 73/cysteine 129, and cysteine 118/cysteine 138.

Belongs to the PBP/GOBP family. In terms of assembly, homodimer.

It is found in the secreted. Functionally, colony queen number, a major feature of social organization, is associated with worker genotype for Gp-9. Colonies are headed by either a single reproductive queen (monogyne form) or multiple queens (polygyne form). Differences in worker Gp-9 genotypes between social forms may cause differences in workers' abilities to recognize queens and regulate their numbers. The sequence is that of Pheromone-binding protein Gp-9 from Solenopsis geminata (Tropical fire ant).